The following is a 587-amino-acid chain: 5-aminolevulinate synthase, erythroid-specific, mitochondrial (587 aa).

A mitochondrion-targeting transit peptide spans 1 to 49; sequence MVTAAMLLQCCPVLARGPTSLLGKVVKTHQFLFGIGRCPILATQGPNCS. Residue Arg-163 participates in succinyl-CoA binding. Cys-258 and Phe-259 together coordinate pyridoxal 5'-phosphate. Positions 280 and 299 each coordinate succinyl-CoA. Residues Ser-332, His-360, and Thr-388 each contribute to the pyridoxal 5'-phosphate site. The active site involves Lys-391. Lys-391 bears the N6-(pyridoxal phosphate)lysine mark. Residues Thr-420 and Thr-421 each coordinate pyridoxal 5'-phosphate. Thr-508 provides a ligand contact to succinyl-CoA.

Belongs to the class-II pyridoxal-phosphate-dependent aminotransferase family. As to quaternary structure, homodimer. Interacts with SUCLA2. In terms of assembly, interacts with SUCLA2. Pyridoxal 5'-phosphate serves as cofactor. In terms of tissue distribution, erythroid-specific.

Its subcellular location is the mitochondrion inner membrane. It catalyses the reaction succinyl-CoA + glycine + H(+) = 5-aminolevulinate + CO2 + CoA. It participates in porphyrin-containing compound metabolism; protoporphyrin-IX biosynthesis; 5-aminolevulinate from glycine: step 1/1. Down-regulated by itaconyl-CoA which acts as a competitive inhibitor of succinyl-CoA substrate. Catalyzes the pyridoxal 5'-phosphate (PLP)-dependent condensation of succinyl-CoA and glycine to form aminolevulinic acid (ALA), with CoA and CO2 as by-products. Contributes significantly to heme formation during erythropoiesis. Functionally, catalyzes the pyridoxal 5'-phosphate (PLP)-dependent condensation of succinyl-CoA and glycine to form aminolevulinic acid (ALA), with CoA and CO2 as by-products. Catalytic activity is 75-85% of isoform 1 activity. Its function is as follows. Catalyzes the pyridoxal 5'-phosphate (PLP)-dependent condensation of succinyl-CoA and glycine to form aminolevulinic acid (ALA), with CoA and CO2 as by-products. Catalytic activity is 65-75% of isoform 1 activity. This chain is 5-aminolevulinate synthase, erythroid-specific, mitochondrial, found in Homo sapiens (Human).